A 126-amino-acid polypeptide reads, in one-letter code: Holo-[acyl-carrier-protein] synthase (126 aa).

2 residues coordinate Mg(2+): aspartate 8 and glutamate 57.

This sequence belongs to the P-Pant transferase superfamily. AcpS family. Requires Mg(2+) as cofactor.

It localises to the cytoplasm. It catalyses the reaction apo-[ACP] + CoA = holo-[ACP] + adenosine 3',5'-bisphosphate + H(+). Functionally, transfers the 4'-phosphopantetheine moiety from coenzyme A to a Ser of acyl-carrier-protein. This Leptospira interrogans serogroup Icterohaemorrhagiae serovar copenhageni (strain Fiocruz L1-130) protein is Holo-[acyl-carrier-protein] synthase.